Consider the following 356-residue polypeptide: Isopentenyl-diphosphate delta-isomerase (356 aa).

8–9 lines the substrate pocket; the sequence is RK. Residues 66–68, serine 96, and asparagine 124 each bind FMN; that span reads AIT. 96–98 provides a ligand contact to substrate; the sequence is SQR. Residue glutamine 160 participates in substrate binding. Glutamate 161 contacts Mg(2+). FMN-binding positions include lysine 201, threonine 231, 280-282, and 301-302; these read GIR and AL.

The protein belongs to the IPP isomerase type 2 family. Homooctamer. Dimer of tetramers. Requires FMN as cofactor. NADPH serves as cofactor. Mg(2+) is required as a cofactor.

The protein resides in the cytoplasm. It catalyses the reaction isopentenyl diphosphate = dimethylallyl diphosphate. Its function is as follows. Involved in the biosynthesis of isoprenoids. Catalyzes the 1,3-allylic rearrangement of the homoallylic substrate isopentenyl (IPP) to its allylic isomer, dimethylallyl diphosphate (DMAPP). The chain is Isopentenyl-diphosphate delta-isomerase from Methanococcus aeolicus (strain ATCC BAA-1280 / DSM 17508 / OCM 812 / Nankai-3).